A 387-amino-acid chain; its full sequence is Putative odorant receptor 19b (387 aa).

The Cytoplasmic portion of the chain corresponds to 1-40; sequence MDISKVDSTRALVNHWRIFRIMGIHPPGKRTFWGRHYTAY. Residues 41–61 traverse the membrane as a helical segment; sequence SMVWNVTFHICIWVSFSVNLL. The Extracellular portion of the chain corresponds to 62–71; it reads QSNSLETFCE. Residues 72 to 92 form a helical membrane-spanning segment; it reads SLCVTMPHTLYMLKLINVRRM. Topologically, residues 93 to 127 are cytoplasmic; the sequence is RGEMISSHWLLRLLDKRLGCADERQIIMAGIERAE. A helical transmembrane segment spans residues 128–148; the sequence is FIFRTIFRGLACTVVLGIIYI. Residues 149 to 171 lie on the Extracellular side of the membrane; it reads SASSEPTLMYPTWIPWNWKDSTS. Residues 172–192 traverse the membrane as a helical segment; that stretch reads AYLATAMLHTTALMANATLVL. Topologically, residues 193-254 are cytoplasmic; the sequence is NLSSYPGTYL…LRLFKSLERS (62 aa). The helical transmembrane segment at 255-275 threads the bilayer; the sequence is LSMTCFLQFFSTACAQCTICY. The Extracellular portion of the chain corresponds to 276–285; the sequence is FLLFGNVGIM. The chain crosses the membrane as a helical span at residues 286 to 306; the sequence is RFMNMLFLLVILTTETLLLCY. Over 307–336 the chain is Cytoplasmic; sequence TAELPCKEGESLLTAVYSCNWLSQSVNFRR. The chain crosses the membrane as a helical span at residues 337 to 357; it reads LLLLMLARCQIPMILVSGVIV. Over 358–387 the chain is Extracellular; the sequence is PISMKTFTVMIKGAYTMLTLLNEIRKTSLE.

Belongs to the insect chemoreceptor superfamily. Heteromeric odorant receptor channel (TC 1.A.69) family. Or2a subfamily. Interacts with Orco. Complexes exist early in the endomembrane system in olfactory sensory neurons (OSNs), coupling these complexes to the conserved ciliary trafficking pathway.

The protein resides in the cell membrane. Its function is as follows. Odorant receptor which mediates acceptance or avoidance behavior, depending on its substrates. The odorant receptor repertoire encodes a large collection of odor stimuli that vary widely in identity, intensity, and duration. May form a complex with Orco to form odorant-sensing units, providing sensitive and prolonged odorant signaling and calcium permeability. This Drosophila melanogaster (Fruit fly) protein is Putative odorant receptor 19b.